The sequence spans 192 residues: PBAN-type neuropeptides (192 aa).

A signal peptide spans Met1–Cys23. Residue Leu47 is modified to Leucine amide. A propeptide spanning residues Ser51–Thr94 is cleaved from the precursor. Leucine amide occurs at positions 103, 122, 158, and 168. Positions Glu171 to Asn192 are excised as a propeptide.

The protein belongs to the pyrokinin family. Expression is restricted to the subesophageal ganglion.

It is found in the secreted. Functionally, a hormone that controls sex pheromone production in females and pheromone responsiveness in male. Also mediates visceral muscle contractile activity (myotropic activity). Identical to MRCH which is implicated in the formation of both melanin in the cuticle and ommochrome in the epidermis of armyworm species. In terms of biological role, diapause hormone (DH) is responsible for induction of embryonic diapause. Its function is as follows. The three SGNPS are far less active than DH in inducing diapause eggs. Beta-SGNP expressed higher pban activity than PBAN-I, but alpha- and gamma-SGNP were far less active in pheromonotropic activity. The sequence is that of PBAN-type neuropeptides from Bombyx mori (Silk moth).